A 183-amino-acid chain; its full sequence is Peptide deformylase (183 aa).

Positions 111 and 154 each coordinate Fe cation. Residue glutamate 155 is part of the active site. Fe cation is bound at residue histidine 158.

This sequence belongs to the polypeptide deformylase family. It depends on Fe(2+) as a cofactor.

It carries out the reaction N-terminal N-formyl-L-methionyl-[peptide] + H2O = N-terminal L-methionyl-[peptide] + formate. In terms of biological role, removes the formyl group from the N-terminal Met of newly synthesized proteins. Requires at least a dipeptide for an efficient rate of reaction. N-terminal L-methionine is a prerequisite for activity but the enzyme has broad specificity at other positions. The polypeptide is Peptide deformylase (Staphylococcus epidermidis (strain ATCC 35984 / DSM 28319 / BCRC 17069 / CCUG 31568 / BM 3577 / RP62A)).